The following is a 333-amino-acid chain: MFNLKNRNFLTLMDFTPKEINYFLDLARDLKRAKYTGTEVQRLKGKNIALIFEKASTRTRCAFEVGAKDQGAHVTYLGPTGSHIGKKESAADTARVLGRMYDGIEYRGFGQEIVETLAEYAGVPVWNGLTDEDHPTQILADFLTIREHFNKPLNEIKFAYVGDGANNMANALMIGAVKMGMDFRIVSPKEIPTDAALVAKCKEIAAETGAKVTITDNIEEGVKGCDVLYTDVWVSMGEPDSVWESKIKLLTPYRVDMNMIKMTGNPDAKFMHCLPAFHDEETAVGKEIKEKYGLSEMEVSHELFESKYSIVFDEAENRMHTIKAVMVATLGDQ.

Carbamoyl phosphate-binding positions include 56–59, Arg107, and 134–137; these read STRT and HPTQ. L-ornithine is bound by residues Asn167, Asp231, and 235–236; that span reads SM. Carbamoyl phosphate contacts are provided by residues 273–274 and Arg318; that span reads CL.

Belongs to the aspartate/ornithine carbamoyltransferase superfamily. OTCase family.

The protein resides in the cytoplasm. It carries out the reaction carbamoyl phosphate + L-ornithine = L-citrulline + phosphate + H(+). It participates in amino-acid degradation; L-arginine degradation via ADI pathway; carbamoyl phosphate from L-arginine: step 2/2. Functionally, reversibly catalyzes the transfer of the carbamoyl group from carbamoyl phosphate (CP) to the N(epsilon) atom of ornithine (ORN) to produce L-citrulline. This is Ornithine carbamoyltransferase from Clostridium botulinum (strain ATCC 19397 / Type A).